The primary structure comprises 424 residues: Putative fasciclin-like arabinogalactan protein 20 (424 aa).

A helical transmembrane segment spans residues 46-66 (LLTTFFLIFFVLDIDLVATSM). Positions 56–194 (VLDIDLVATS…YVVIYGSDEF (139 aa)) constitute an FAS1 1 domain. 2 N-linked (GlcNAc...) asparagine glycosylation sites follow: Asn153 and Asn160. Over residues 199–226 (TKISDDSSSSSSIPSTTSSTGSIPIPSS) the composition is skewed to low complexity. A disordered region spans residues 199 to 246 (TKISDDSSSSSSIPSTTSSTGSIPIPSSATQTPPSPNIASDSTRNLPN). Over residues 227 to 246 (ATQTPPSPNIASDSTRNLPN) the composition is skewed to polar residues. Residues Asn246, Asn283, and Asn287 are each glycosylated (N-linked (GlcNAc...) asparagine). Residues 250 to 384 (PVNRFNIFES…IAVHGFNQMI (135 aa)) form the FAS1 2 domain. Residues 405–424 (QEEEGVHGEYSSELGDYGLH) form a disordered region.

The protein belongs to the fasciclin-like AGP family.

The protein localises to the membrane. Functionally, may be a cell surface adhesion protein. This Arabidopsis thaliana (Mouse-ear cress) protein is Putative fasciclin-like arabinogalactan protein 20 (FLA20).